Reading from the N-terminus, the 525-residue chain is Light-independent protochlorophyllide reductase subunit B (525 aa).

D36 is a binding site for [4Fe-4S] cluster. The active-site Proton donor is D274. 409–410 (GL) contributes to the substrate binding site. The disordered stretch occupies residues 433–464 (HGGKAVAREESPVAPADLAPAATSDTPAAPSP). The span at 444 to 464 (PVAPADLAPAATSDTPAAPSP) shows a compositional bias: low complexity.

It belongs to the ChlB/BchB/BchZ family. As to quaternary structure, protochlorophyllide reductase is composed of three subunits; BchL, BchN and BchB. Forms a heterotetramer of two BchB and two BchN subunits. [4Fe-4S] cluster serves as cofactor.

The catalysed reaction is chlorophyllide a + oxidized 2[4Fe-4S]-[ferredoxin] + 2 ADP + 2 phosphate = protochlorophyllide a + reduced 2[4Fe-4S]-[ferredoxin] + 2 ATP + 2 H2O. It functions in the pathway porphyrin-containing compound metabolism; bacteriochlorophyll biosynthesis (light-independent). Functionally, component of the dark-operative protochlorophyllide reductase (DPOR) that uses Mg-ATP and reduced ferredoxin to reduce ring D of protochlorophyllide (Pchlide) to form chlorophyllide a (Chlide). This reaction is light-independent. The NB-protein (BchN-BchB) is the catalytic component of the complex. This chain is Light-independent protochlorophyllide reductase subunit B, found in Rhodobacter capsulatus (strain ATCC BAA-309 / NBRC 16581 / SB1003).